A 275-amino-acid chain; its full sequence is NADPH-dependent 7-cyano-7-deazaguanine reductase (275 aa).

81–83 (IES) contacts substrate. 83 to 84 (SK) is a binding site for NADPH. C181 functions as the Thioimide intermediate in the catalytic mechanism. Catalysis depends on D188, which acts as the Proton donor. 220–221 (HE) provides a ligand contact to substrate. 249–250 (RG) serves as a coordination point for NADPH.

This sequence belongs to the GTP cyclohydrolase I family. QueF type 2 subfamily. In terms of assembly, homodimer.

The protein localises to the cytoplasm. It catalyses the reaction 7-aminomethyl-7-carbaguanine + 2 NADP(+) = 7-cyano-7-deazaguanine + 2 NADPH + 3 H(+). It functions in the pathway tRNA modification; tRNA-queuosine biosynthesis. Catalyzes the NADPH-dependent reduction of 7-cyano-7-deazaguanine (preQ0) to 7-aminomethyl-7-deazaguanine (preQ1). The sequence is that of NADPH-dependent 7-cyano-7-deazaguanine reductase from Xylella fastidiosa (strain M23).